We begin with the raw amino-acid sequence, 102 residues long: Co-chaperonin GroES (102 aa).

This sequence belongs to the GroES chaperonin family. Heptamer of 7 subunits arranged in a ring. Interacts with the chaperonin GroEL.

The protein resides in the cytoplasm. Together with the chaperonin GroEL, plays an essential role in assisting protein folding. The GroEL-GroES system forms a nano-cage that allows encapsulation of the non-native substrate proteins and provides a physical environment optimized to promote and accelerate protein folding. GroES binds to the apical surface of the GroEL ring, thereby capping the opening of the GroEL channel. The sequence is that of Co-chaperonin GroES from Anabaena sp. (strain L31).